Here is a 327-residue protein sequence, read N- to C-terminus: D-alanine--D-alanine ligase (327 aa).

The ATP-grasp domain maps to 113-312; sequence KRLWMTHGLA…YEDFVMQVLA (200 aa). 139–194 serves as a coordination point for ATP; it reads VADLGLPLIVKPAREGSSIGLTKVIAADQMRAAFEKAAGLDADVIAETFIDGAELT. Residues aspartate 266, glutamate 279, and asparagine 281 each contribute to the Mg(2+) site.

It belongs to the D-alanine--D-alanine ligase family. Requires Mg(2+) as cofactor. It depends on Mn(2+) as a cofactor.

Its subcellular location is the cytoplasm. The enzyme catalyses 2 D-alanine + ATP = D-alanyl-D-alanine + ADP + phosphate + H(+). The protein operates within cell wall biogenesis; peptidoglycan biosynthesis. Its function is as follows. Cell wall formation. The polypeptide is D-alanine--D-alanine ligase (Cupriavidus metallidurans (strain ATCC 43123 / DSM 2839 / NBRC 102507 / CH34) (Ralstonia metallidurans)).